The sequence spans 338 residues: Ketol-acid reductoisomerase (NADP(+)) (338 aa).

A KARI N-terminal Rossmann domain is found at 1–181 (MKVFYDKDCD…GGGRTGIIET (181 aa)). NADP(+)-binding positions include 24–27 (YGSQ), arginine 47, serine 50, threonine 52, and 82–85 (DEFQ). Histidine 107 is a catalytic residue. Position 133 (glycine 133) interacts with NADP(+). The 146-residue stretch at 182-327 (TFKDETETDL…EQLRSMMPWI (146 aa)) folds into the KARI C-terminal knotted domain. Mg(2+) is bound by residues aspartate 190, glutamate 194, glutamate 226, and glutamate 230. Serine 251 lines the substrate pocket.

It belongs to the ketol-acid reductoisomerase family. The cofactor is Mg(2+).

The enzyme catalyses (2R)-2,3-dihydroxy-3-methylbutanoate + NADP(+) = (2S)-2-acetolactate + NADPH + H(+). The catalysed reaction is (2R,3R)-2,3-dihydroxy-3-methylpentanoate + NADP(+) = (S)-2-ethyl-2-hydroxy-3-oxobutanoate + NADPH + H(+). It functions in the pathway amino-acid biosynthesis; L-isoleucine biosynthesis; L-isoleucine from 2-oxobutanoate: step 2/4. Its pathway is amino-acid biosynthesis; L-valine biosynthesis; L-valine from pyruvate: step 2/4. Its function is as follows. Involved in the biosynthesis of branched-chain amino acids (BCAA). Catalyzes an alkyl-migration followed by a ketol-acid reduction of (S)-2-acetolactate (S2AL) to yield (R)-2,3-dihydroxy-isovalerate. In the isomerase reaction, S2AL is rearranged via a Mg-dependent methyl migration to produce 3-hydroxy-3-methyl-2-ketobutyrate (HMKB). In the reductase reaction, this 2-ketoacid undergoes a metal-dependent reduction by NADPH to yield (R)-2,3-dihydroxy-isovalerate. This Pseudomonas putida (strain W619) protein is Ketol-acid reductoisomerase (NADP(+)).